The chain runs to 428 residues: Probable mannosyltransferase YUR1 (428 aa).

The Cytoplasmic segment spans residues 1–3 (MAK). Residues 4 to 24 (GGSLYIVGIFLPIWTFMIYIF) form a helical; Signal-anchor for type II membrane protein membrane-spanning segment. The tract at residues 25–88 (GKELFLIRKY…TRQNDSDSFH (64 aa)) is stem region. Topologically, residues 25–428 (GKELFLIRKY…YFLKEEQDEI (404 aa)) are lumenal. 4 N-linked (GlcNAc...) asparagine glycosylation sites follow: Asn-77, Asn-82, Asn-92, and Asn-167. The tract at residues 89–428 (LRENATILML…YFLKEEQDEI (340 aa)) is catalytic. Residue Glu-313 is the Nucleophile of the active site. N-linked (GlcNAc...) asparagine glycosylation occurs at Asn-414.

It belongs to the glycosyltransferase 15 family.

The protein resides in the golgi apparatus membrane. It functions in the pathway protein modification; protein glycosylation. Possible glycosyltransferase involved in N-linked glycosylation. Transfers an alpha-D-mannosyl residue from GDP-mannose into lipid-linked oligosaccharide, forming an alpha-(1-&gt;2)-D-mannosyl-D-mannose linkage. The chain is Probable mannosyltransferase YUR1 (YUR1) from Saccharomyces cerevisiae (strain ATCC 204508 / S288c) (Baker's yeast).